A 489-amino-acid polypeptide reads, in one-letter code: Rhamnulokinase (489 aa).

13-17 contacts ATP; that stretch reads ASSGR. An intrachain disulfide couples Cys68 to Cys222. Residues Gly83 and 236–238 each bind substrate; that span reads HDT. Asp237 serves as the catalytic Proton acceptor. Thr259 contributes to the ATP binding site. A substrate-binding site is contributed by Asn296. Residue Gln304 coordinates ATP. Residues Cys353 and Cys370 are joined by a disulfide bond. Position 402 (Gly402) interacts with ATP. A disulfide bridge links Cys413 with Cys417.

Belongs to the rhamnulokinase family. In terms of assembly, monomer. Requires Mg(2+) as cofactor.

It catalyses the reaction L-rhamnulose + ATP = L-rhamnulose 1-phosphate + ADP + H(+). The protein operates within carbohydrate degradation; L-rhamnose degradation; glycerone phosphate from L-rhamnose: step 2/3. Involved in the catabolism of L-rhamnose (6-deoxy-L-mannose). Catalyzes the transfer of the gamma-phosphate group from ATP to the 1-hydroxyl group of L-rhamnulose to yield L-rhamnulose 1-phosphate. This chain is Rhamnulokinase, found in Escherichia coli O139:H28 (strain E24377A / ETEC).